The primary structure comprises 392 residues: Aryl-hydrocarbon-interacting protein-like 1 (392 aa).

The 93-residue stretch at 53–145 (RQVDQPMHII…DLDELQKEPQ (93 aa)) folds into the PPIase FKBP-type domain. 3 TPR repeats span residues 178–211 (VPVLHGEGNRLFKLGRYEEASSKYQEAIICLRNL), 230–263 (NTLTLNYCQCLLKKEEYYEVLEHTSDILRHHPGI), and 264–297 (VKAYYVRARAHAEVWNEAEAKADLQKVLELEPSM). The segment at 329 to 392 (QGATQPPAEP…PLSPGHSLQH (64 aa)) is disordered. Composition is skewed to pro residues over residues 335–346 (PAEPPAQPPTAP) and 355–366 (PADPPAEPPTAP).

Interacts with NUB1.

It localises to the cytoplasm. The protein resides in the nucleus. May be important in protein trafficking and/or protein folding and stabilization. This chain is Aryl-hydrocarbon-interacting protein-like 1 (AIPL1), found in Macaca mulatta (Rhesus macaque).